The sequence spans 485 residues: Skb1 localization factor 1 (485 aa).

The interval 1–200 is sufficient for interaction with Skb1; that stretch reads MSSIIQNPIE…VDDSDLTPHT (200 aa). Disordered regions lie at residues 117–230, 286–416, and 446–466; these read NAAN…MSRN, ETQH…LRRS, and TTQE…KPEK. A compositionally biased stretch (polar residues) spans 171–182; that stretch reads SRSSRYSKTSDL. A compositionally biased stretch (basic and acidic residues) spans 189 to 198; it reads RFVDDSDLTP. Composition is skewed to polar residues over residues 218–230 and 341–363; these read GRSS…MSRN and VGSS…QQDS. Residue serine 222 is modified to Phosphoserine. Residues 371 to 393 are compositionally biased toward basic and acidic residues; that stretch reads SERSYRRVRDQYLSKPRLSDKNR. A compositionally biased stretch (polar residues) spans 394 to 416; sequence YSTFSEFPGQGTPSASQSNLRRS. Basic and acidic residues predominate over residues 447-464; sequence TQERKPVVKPDSIKTVKP. Residues 451–485 form a required and sufficient for plasma membrane anchoring; lysine-rich, may bind to anionic lipids in the plasma membrane region; that stretch reads KPVVKPDSIKTVKPEKKKSKGFFKKLMHKISHIFD. Position 458 is a phosphoserine (serine 458).

As to quaternary structure, interacts with Skb1.

It is found in the cell membrane. Functionally, acts as a membrane anchor for Skb1 in forming plasma membrane microdomains. Promotes mitotic entry by sequestering mitotic inhibitor Skb1 from its regulatory targets Cdr1 and Wee1. This Schizosaccharomyces pombe (strain 972 / ATCC 24843) (Fission yeast) protein is Skb1 localization factor 1.